Here is a 237-residue protein sequence, read N- to C-terminus: 7-cyano-7-deazaguanine synthase (237 aa).

An ATP-binding site is contributed by 15–25 (LSGGMDSTVCA). Residues Cys197, Cys205, Cys208, and Cys211 each contribute to the Zn(2+) site.

The protein belongs to the QueC family. The cofactor is Zn(2+).

It catalyses the reaction 7-carboxy-7-deazaguanine + NH4(+) + ATP = 7-cyano-7-deazaguanine + ADP + phosphate + H2O + H(+). The protein operates within purine metabolism; 7-cyano-7-deazaguanine biosynthesis. Catalyzes the ATP-dependent conversion of 7-carboxy-7-deazaguanine (CDG) to 7-cyano-7-deazaguanine (preQ(0)). The polypeptide is 7-cyano-7-deazaguanine synthase (Koribacter versatilis (strain Ellin345)).